Consider the following 122-residue polypeptide: Small ribosomal subunit protein uS13 (122 aa).

A compositionally biased stretch (basic residues) spans 97–114 (PVRGQRTHTNAKTRKGKS). Positions 97–122 (PVRGQRTHTNAKTRKGKSRLPIAGKE) are disordered.

It belongs to the universal ribosomal protein uS13 family. In terms of assembly, part of the 30S ribosomal subunit. Forms a loose heterodimer with protein S19. Forms two bridges to the 50S subunit in the 70S ribosome.

Functionally, located at the top of the head of the 30S subunit, it contacts several helices of the 16S rRNA. In the 70S ribosome it contacts the 23S rRNA (bridge B1a) and protein L5 of the 50S subunit (bridge B1b), connecting the 2 subunits; these bridges are implicated in subunit movement. Contacts the tRNAs in the A and P-sites. In Wolbachia sp. subsp. Brugia malayi (strain TRS), this protein is Small ribosomal subunit protein uS13.